A 289-amino-acid chain; its full sequence is ATP synthase subunit a (289 aa).

The next 6 helical transmembrane spans lie at 43 to 63 (AFHL…LLIF), 103 to 123 (VIAP…AVDL), 160 to 180 (FCVF…GGFI), 193 to 213 (IFVQ…TLIA), 232 to 252 (VFIL…GLGV), and 259 to 279 (AVFH…LTIV).

Belongs to the ATPase A chain family. F-type ATPases have 2 components, CF(1) - the catalytic core - and CF(0) - the membrane proton channel. CF(1) has five subunits: alpha(3), beta(3), gamma(1), delta(1), epsilon(1). CF(0) has three main subunits: a(1), b(2) and c(9-12). The alpha and beta chains form an alternating ring which encloses part of the gamma chain. CF(1) is attached to CF(0) by a central stalk formed by the gamma and epsilon chains, while a peripheral stalk is formed by the delta and b chains.

The protein localises to the cell inner membrane. In terms of biological role, key component of the proton channel; it plays a direct role in the translocation of protons across the membrane. The chain is ATP synthase subunit a from Pseudomonas putida (strain ATCC 700007 / DSM 6899 / JCM 31910 / BCRC 17059 / LMG 24140 / F1).